The following is a 359-amino-acid chain: ATPase ASNA1 homolog (359 aa).

An ATP-binding site is contributed by 23-30 (KGGVGKTT). D63 is a catalytic residue. Residues E252 and N279 each contribute to the ATP site. Positions 291 and 294 each coordinate Zn(2+).

This sequence belongs to the arsA ATPase family. As to quaternary structure, homodimer.

The protein resides in the cytoplasm. It localises to the endoplasmic reticulum. Functionally, ATPase required for the post-translational delivery of tail-anchored (TA) proteins to the endoplasmic reticulum. Recognizes and selectively binds the transmembrane domain of TA proteins in the cytosol. This complex then targets to the endoplasmic reticulum by membrane-bound receptors, where the tail-anchored protein is released for insertion. This process is regulated by ATP binding and hydrolysis. ATP binding drives the homodimer towards the closed dimer state, facilitating recognition of newly synthesized TA membrane proteins. ATP hydrolysis is required for insertion. Subsequently, the homodimer reverts towards the open dimer state, lowering its affinity for the membrane-bound receptor, and returning it to the cytosol to initiate a new round of targeting. The sequence is that of ATPase ASNA1 homolog from Trypanosoma cruzi (strain CL Brener).